Consider the following 363-residue polypeptide: Phosphoserine aminotransferase (363 aa).

R42 is an L-glutamate binding site. Pyridoxal 5'-phosphate is bound by residues 76–77 (GR), W102, T156, D175, and Q198. K199 is modified (N6-(pyridoxal phosphate)lysine). Position 240 to 241 (240 to 241 (NT)) interacts with pyridoxal 5'-phosphate.

The protein belongs to the class-V pyridoxal-phosphate-dependent aminotransferase family. SerC subfamily. Homodimer. It depends on pyridoxal 5'-phosphate as a cofactor.

The protein localises to the cytoplasm. The enzyme catalyses O-phospho-L-serine + 2-oxoglutarate = 3-phosphooxypyruvate + L-glutamate. It carries out the reaction 4-(phosphooxy)-L-threonine + 2-oxoglutarate = (R)-3-hydroxy-2-oxo-4-phosphooxybutanoate + L-glutamate. Its pathway is amino-acid biosynthesis; L-serine biosynthesis; L-serine from 3-phospho-D-glycerate: step 2/3. It functions in the pathway cofactor biosynthesis; pyridoxine 5'-phosphate biosynthesis; pyridoxine 5'-phosphate from D-erythrose 4-phosphate: step 3/5. Functionally, catalyzes the reversible conversion of 3-phosphohydroxypyruvate to phosphoserine and of 3-hydroxy-2-oxo-4-phosphonooxybutanoate to phosphohydroxythreonine. The polypeptide is Phosphoserine aminotransferase (Shewanella baltica (strain OS155 / ATCC BAA-1091)).